Reading from the N-terminus, the 70-residue chain is Bowman-Birk type proteinase inhibitor A-II (70 aa).

Disulfide bonds link Cys11–Cys68, Cys12–Cys29, Cys15–Cys63, Cys17–Cys27, Cys36–Cys43, Cys40–Cys55, and Cys45–Cys53.

It belongs to the Bowman-Birk serine protease inhibitor family.

These proteins inhibit trypsin and chymotrypsin, having 2 sites of interaction with trypsin. The site of interaction with chymotrypsin has not been determined but is not independent of the trypsin-reactive sites. In Arachis hypogaea (Peanut), this protein is Bowman-Birk type proteinase inhibitor A-II.